A 312-amino-acid polypeptide reads, in one-letter code: Probable myosin light chain kinase DDB_G0282429 (312 aa).

The segment at 1–28 (MDRMDSSDEEIDNISDDELQSGDEIEVE) is disordered. Over residues 7-27 (SDEEIDNISDDELQSGDEIEV) the composition is skewed to acidic residues. The Protein kinase domain occupies 38–290 (YILGNEIGRG…FEQCLIHPWV (253 aa)). Residues 44–52 (IGRGAFSIV) and Lys-67 each bind ATP. Asp-158 serves as the catalytic Proton acceptor.

The protein belongs to the protein kinase superfamily. CAMK Ser/Thr protein kinase family. CaMK subfamily.

It carries out the reaction L-seryl-[myosin light chain] + ATP = O-phospho-L-seryl-[myosin light chain] + ADP + H(+). It catalyses the reaction L-threonyl-[myosin light chain] + ATP = O-phospho-L-threonyl-[myosin light chain] + ADP + H(+). Its activity is regulated as follows. Does not have a calmodulin-binding domain. In terms of biological role, may phosphorylate a specific serine in the N-terminus of a myosin light chain. This chain is Probable myosin light chain kinase DDB_G0282429, found in Dictyostelium discoideum (Social amoeba).